A 202-amino-acid polypeptide reads, in one-letter code: Putative 3-methyladenine DNA glycosylase (202 aa).

Belongs to the DNA glycosylase MPG family.

The chain is Putative 3-methyladenine DNA glycosylase from Clostridium botulinum (strain Alaska E43 / Type E3).